We begin with the raw amino-acid sequence, 400 residues long: GTPase Obg (400 aa).

One can recognise an Obg domain in the interval 1-159 (MKFVDEVQIR…RTLKLELLLL (159 aa)). One can recognise an OBG-type G domain in the interval 160–333 (ADVGMLGLPN…VCYDILDLLD (174 aa)). Residues 166-173 (GLPNAGKS), 191-195 (FTTLV), 213-216 (DIPG), 283-286 (NKMD), and 314-316 (SAI) contribute to the GTP site. S173 and T193 together coordinate Mg(2+).

The protein belongs to the TRAFAC class OBG-HflX-like GTPase superfamily. OBG GTPase family. As to quaternary structure, monomer. The cofactor is Mg(2+).

It is found in the cytoplasm. In terms of biological role, an essential GTPase which binds GTP, GDP and possibly (p)ppGpp with moderate affinity, with high nucleotide exchange rates and a fairly low GTP hydrolysis rate. Plays a role in control of the cell cycle, stress response, ribosome biogenesis and in those bacteria that undergo differentiation, in morphogenesis control. The protein is GTPase Obg of Aeromonas salmonicida (strain A449).